The primary structure comprises 184 residues: UPF0149 protein PSPA7_5968 (184 aa).

This sequence belongs to the UPF0149 family.

The polypeptide is UPF0149 protein PSPA7_5968 (Pseudomonas paraeruginosa (strain DSM 24068 / PA7) (Pseudomonas aeruginosa (strain PA7))).